Consider the following 138-residue polypeptide: Invertebrate-type lysozyme 6 (138 aa).

An N-terminal signal peptide occupies residues 1–18 (MFVKLCGILAFAVTYASS). Residues 19 to 138 (DCLQCICKKE…WNGIKGLGCS (120 aa)) enclose the I-type lysozyme domain. 6 disulfide bridges follow: Cys20–Cys106, Cys25–Cys31, Cys36–Cys45, Cys58–Cys86, Cys76–Cys82, and Cys98–Cys120. Glu28 functions as the Proton donor in the catalytic mechanism. Residue Asp39 is the Nucleophile of the active site. 51–57 (KLSYYKD) lines the substrate pocket. Substrate contacts are provided by residues Tyr90 and 113–115 (HNG).

It belongs to the glycosyl hydrolase 22 family. Type-I lysozyme subfamily. As to expression, expressed in pharyngeal gland cells and duct projections, coelomocytes and intestine.

The enzyme catalyses Hydrolysis of (1-&gt;4)-beta-linkages between N-acetylmuramic acid and N-acetyl-D-glucosamine residues in a peptidoglycan and between N-acetyl-D-glucosamine residues in chitodextrins.. In terms of biological role, has bacteriolytic activity against Gram-positive bacteria. The chain is Invertebrate-type lysozyme 6 from Caenorhabditis elegans.